The chain runs to 392 residues: Selenide, water dikinase 1 (392 aa).

Residue cysteine 31 is part of the active site. ATP-binding positions include lysine 32, 67 to 69, aspartate 87, aspartate 110, and 161 to 164; these read GMD and GGQT. Aspartate 69 provides a ligand contact to Mg(2+). Aspartate 110 contacts Mg(2+). Aspartate 265 lines the Mg(2+) pocket.

Belongs to the selenophosphate synthase 1 family. Class II subfamily. Homodimer. It depends on Mg(2+) as a cofactor.

It is found in the cell membrane. It localises to the nucleus membrane. The enzyme catalyses hydrogenselenide + ATP + H2O = selenophosphate + AMP + phosphate + 2 H(+). Synthesizes selenophosphate from selenide and ATP. This chain is Selenide, water dikinase 1 (sephs1), found in Xenopus tropicalis (Western clawed frog).